Consider the following 393-residue polypeptide: NAD(P)H-quinone oxidoreductase subunit H, chloroplastic (393 aa).

This sequence belongs to the complex I 49 kDa subunit family. As to quaternary structure, NDH is composed of at least 16 different subunits, 5 of which are encoded in the nucleus.

The protein resides in the plastid. It is found in the chloroplast thylakoid membrane. It carries out the reaction a plastoquinone + NADH + (n+1) H(+)(in) = a plastoquinol + NAD(+) + n H(+)(out). The enzyme catalyses a plastoquinone + NADPH + (n+1) H(+)(in) = a plastoquinol + NADP(+) + n H(+)(out). NDH shuttles electrons from NAD(P)H:plastoquinone, via FMN and iron-sulfur (Fe-S) centers, to quinones in the photosynthetic chain and possibly in a chloroplast respiratory chain. The immediate electron acceptor for the enzyme in this species is believed to be plastoquinone. Couples the redox reaction to proton translocation, and thus conserves the redox energy in a proton gradient. The protein is NAD(P)H-quinone oxidoreductase subunit H, chloroplastic of Gossypium hirsutum (Upland cotton).